The following is a 646-amino-acid chain: Heat shock 70 kDa protein (646 aa).

The segment covering 613-632 (GGAPGGMPGAAPGGFPGGAP) has biased composition (gly residues). Residues 613-646 (GGAPGGMPGAAPGGFPGGAPGSNDNEGPTVEEVD) are disordered.

The protein belongs to the heat shock protein 70 family.

This Neurospora crassa (strain ATCC 24698 / 74-OR23-1A / CBS 708.71 / DSM 1257 / FGSC 987) protein is Heat shock 70 kDa protein (hsps-1).